The following is a 223-amino-acid chain: Proteasome subunit beta type-1 (223 aa).

Belongs to the peptidase T1B family. In terms of assembly, the 26S proteasome consists of a 20S proteasome core and two 19S regulatory subunits. The 20S proteasome core is composed of 28 subunits that are arranged in four stacked rings, resulting in a barrel-shaped structure. The two end rings are each formed by seven alpha subunits, and the two central rings are each formed by seven beta subunits. The catalytic chamber with the active sites is on the inside of the barrel.

The protein localises to the cytoplasm. It is found in the nucleus. Its function is as follows. Non-catalytic component of the proteasome, a multicatalytic proteinase complex which is characterized by its ability to cleave peptides with Arg, Phe, Tyr, Leu, and Glu adjacent to the leaving group at neutral or slightly basic pH. The proteasome has an ATP-dependent proteolytic activity. The chain is Proteasome subunit beta type-1 (PBF1) from Petunia hybrida (Petunia).